Consider the following 236-residue polypeptide: Hydroxyacylglutathione hydrolase (236 aa).

The Zn(2+) site is built by histidine 52, histidine 54, aspartate 56, histidine 57, histidine 108, aspartate 125, and histidine 163.

This sequence belongs to the metallo-beta-lactamase superfamily. Glyoxalase II family. In terms of assembly, monomer. It depends on Zn(2+) as a cofactor.

The catalysed reaction is an S-(2-hydroxyacyl)glutathione + H2O = a 2-hydroxy carboxylate + glutathione + H(+). It functions in the pathway secondary metabolite metabolism; methylglyoxal degradation; (R)-lactate from methylglyoxal: step 2/2. Thiolesterase that catalyzes the hydrolysis of S-D-lactoyl-glutathione to form glutathione and D-lactic acid. This chain is Hydroxyacylglutathione hydrolase, found in Mannheimia succiniciproducens (strain KCTC 0769BP / MBEL55E).